The sequence spans 229 residues: Probable coenzyme A transferase subunit alpha (229 aa).

CoA is bound at residue 26 to 32; sequence GGFGGVG.

The protein belongs to the 3-oxoacid CoA-transferase subunit A family. As to quaternary structure, heterodimer of a subunit alpha and a subunit beta.

The polypeptide is Probable coenzyme A transferase subunit alpha (yodS) (Bacillus subtilis (strain 168)).